We begin with the raw amino-acid sequence, 582 residues long: Probable DNA ligase (582 aa).

Residue Glu-243 coordinates ATP. Lys-245 (N6-AMP-lysine intermediate) is an active-site residue. 6 residues coordinate ATP: Arg-250, Arg-265, Glu-295, Phe-335, Arg-410, and Lys-416.

It belongs to the ATP-dependent DNA ligase family. Mg(2+) serves as cofactor.

The enzyme catalyses ATP + (deoxyribonucleotide)n-3'-hydroxyl + 5'-phospho-(deoxyribonucleotide)m = (deoxyribonucleotide)n+m + AMP + diphosphate.. Its function is as follows. DNA ligase that seals nicks in double-stranded DNA during DNA replication, DNA recombination and DNA repair. This chain is Probable DNA ligase, found in Dictyoglomus turgidum (strain DSM 6724 / Z-1310).